A 420-amino-acid chain; its full sequence is UDP-N-acetylglucosamine 1-carboxyvinyltransferase (420 aa).

Residue 22 to 23 (KN) coordinates phosphoenolpyruvate. Arginine 93 lines the UDP-N-acetyl-alpha-D-glucosamine pocket. Residue cysteine 117 is the Proton donor of the active site. Cysteine 117 is modified (2-(S-cysteinyl)pyruvic acid O-phosphothioketal). Residues 122-126 (RPVDL), aspartate 307, and valine 329 each bind UDP-N-acetyl-alpha-D-glucosamine.

Belongs to the EPSP synthase family. MurA subfamily.

Its subcellular location is the cytoplasm. The catalysed reaction is phosphoenolpyruvate + UDP-N-acetyl-alpha-D-glucosamine = UDP-N-acetyl-3-O-(1-carboxyvinyl)-alpha-D-glucosamine + phosphate. It participates in cell wall biogenesis; peptidoglycan biosynthesis. Functionally, cell wall formation. Adds enolpyruvyl to UDP-N-acetylglucosamine. This Hahella chejuensis (strain KCTC 2396) protein is UDP-N-acetylglucosamine 1-carboxyvinyltransferase.